We begin with the raw amino-acid sequence, 171 residues long: Odorant-binding protein 1b (171 aa).

A signal peptide spans 1-19 (MMVKFLLLALVFGLAHVHA). 2 disulfides stabilise this stretch: Cys57–Cys61 and Cys76–Cys169.

It belongs to the calycin superfamily. Lipocalin family. As to quaternary structure, may form a heterodimer with OBP1A. In terms of processing, the N-terminus may be blocked. Expressed in nasal mucosa (at protein level). Specifically detected in septal and lateral nasal glands.

It localises to the secreted. In terms of biological role, binds the chemical odorant 2-isobutyl-3-methoxypyrazine. The polypeptide is Odorant-binding protein 1b (Mus musculus (Mouse)).